The sequence spans 88 residues: Small ribosomal subunit protein bS16c (88 aa).

The protein belongs to the bacterial ribosomal protein bS16 family.

The protein resides in the plastid. Its subcellular location is the chloroplast. This Oenothera elata subsp. hookeri (Hooker's evening primrose) protein is Small ribosomal subunit protein bS16c.